A 174-amino-acid polypeptide reads, in one-letter code: Adipose-secreted signaling protein (174 aa).

Ala-2 carries the N-acetylalanine modification. The residue at position 147 (Thr-147) is a Phosphothreonine.

Belongs to the ADISSP family.

The protein resides in the secreted. Functionally, adipocyte-secreted protein (adipokine) that acts as a key regulator for white adipose tissue (WAT) thermogenesis and glucose homeostasis at least in part through activation of protein kinase A (PKA). The protein is Adipose-secreted signaling protein of Bos taurus (Bovine).